Here is a 235-residue protein sequence, read N- to C-terminus: MICOS complex subunit MIC25 (235 aa).

A lipid anchor (N-myristoyl glycine) is attached at G2. S13 and S31 each carry phosphoserine. Disordered regions lie at residues 31 to 90 (SENV…VKRY) and 106 to 132 (KRER…HEEQ). Residues 129–176 (HEEQKSVRLARELESREAELRRRDTFYKEQLERIERKNAEMYKLSSEQ) are a coiled coil. The CHCH domain maps to 194–235 (EPVCSGLQAQILHCYRDRPHEVLLCSDLVKAYQRCVSAAHKG). Short sequence motifs (cx9C motif) lie at residues 197-207 (CSGLQAQILHC) and 218-228 (CSDLVKAYQRC). Intrachain disulfides connect C197/C228 and C207/C218.

The protein belongs to the MICOS complex subunit Mic19 family. Metazoan Mic25 subfamily. As to quaternary structure, component of the mitochondrial contact site and cristae organizing system (MICOS) complex, composed of at least MICOS10/MIC10, CHCHD3/MIC19, CHCHD6/MIC25, APOOL/MIC27, IMMT/MIC60, APOO/MIC23/MIC26 and MICOS13/MIC13. This complex was also known under the names MINOS or MitOS complex. The MICOS complex associates with mitochondrial outer membrane proteins SAMM50, MTX1 and MTX2 (together described as components of the mitochondrial outer membrane sorting assembly machinery (SAM) complex) and DNAJC11, mitochondrial inner membrane protein TMEM11 and with HSPA9. The MICOS and SAM complexes together with DNAJC11 are part of a large protein complex spanning both membranes termed the mitochondrial intermembrane space bridging (MIB) complex. Interacts with DISC1. Interacts with DISC1. Interacts with IMMT/MIC60. In terms of assembly, (Microbial infection) Interacts with human cytomegalovirus protein UL37 isoform vMIA; this interaction rewires mitochondria by engaging the conserved MICOS complex.

Its subcellular location is the mitochondrion inner membrane. The protein localises to the mitochondrion. Functionally, component of the MICOS complex, a large protein complex of the mitochondrial inner membrane that plays crucial roles in the maintenance of crista junctions, inner membrane architecture, and formation of contact sites to the outer membrane. This chain is MICOS complex subunit MIC25 (CHCHD6), found in Homo sapiens (Human).